Reading from the N-terminus, the 1676-residue chain is Protein TIC 214 (1676 aa).

6 consecutive transmembrane segments (helical) span residues 23 to 43 (AGPL…PIAP), 71 to 91 (GILI…FLSI), 96 to 116 (LYMI…YMFF), 145 to 165 (AFLD…SPVM), 179 to 199 (VSLF…MFVL), and 226 to 246 (IFPP…PVSF).

The protein belongs to the TIC214 family. In terms of assembly, part of the Tic complex.

The protein resides in the plastid. The protein localises to the chloroplast inner membrane. Involved in protein precursor import into chloroplasts. May be part of an intermediate translocation complex acting as a protein-conducting channel at the inner envelope. This Zygnema circumcarinatum (Green alga) protein is Protein TIC 214.